Reading from the N-terminus, the 379-residue chain is Cytochrome b (379 aa).

4 consecutive transmembrane segments (helical) span residues 33–53, 77–98, 113–133, and 178–198; these read FGSL…FLAM, WLIR…YLHI, WNIG…GYVL, and FFAF…LHLL. His83 and His97 together coordinate heme b. His182 and His196 together coordinate heme b. Position 201 (His201) interacts with a ubiquinone. 4 consecutive transmembrane segments (helical) span residues 226-246, 288-308, 320-340, and 347-367; these read YKDL…ALFY, LGGV…PILH, ISQL…WIGG, and YIII…VLNP.

The protein belongs to the cytochrome b family. The cytochrome bc1 complex contains 3 respiratory subunits (MT-CYB, CYC1 and UQCRFS1), 2 core proteins (UQCRC1 and UQCRC2) and probably 6 low-molecular weight proteins. The cofactor is heme b.

It localises to the mitochondrion inner membrane. Functionally, component of the ubiquinol-cytochrome c reductase complex (complex III or cytochrome b-c1 complex) that is part of the mitochondrial respiratory chain. The b-c1 complex mediates electron transfer from ubiquinol to cytochrome c. Contributes to the generation of a proton gradient across the mitochondrial membrane that is then used for ATP synthesis. This is Cytochrome b (mt-cyb) from Anguilla mossambica (African longfin eel).